The chain runs to 447 residues: Exodeoxyribonuclease 7 large subunit (447 aa).

Belongs to the XseA family. As to quaternary structure, heterooligomer composed of large and small subunits.

The protein localises to the cytoplasm. It catalyses the reaction Exonucleolytic cleavage in either 5'- to 3'- or 3'- to 5'-direction to yield nucleoside 5'-phosphates.. Functionally, bidirectionally degrades single-stranded DNA into large acid-insoluble oligonucleotides, which are then degraded further into small acid-soluble oligonucleotides. In Exiguobacterium sibiricum (strain DSM 17290 / CCUG 55495 / CIP 109462 / JCM 13490 / 255-15), this protein is Exodeoxyribonuclease 7 large subunit.